The following is a 190-amino-acid chain: Ganglioside GM2 activator (190 aa).

The first 23 residues, 1 to 23, serve as a signal peptide directing secretion; sequence MQSLMQAPVLIALGLLFAAPAQA. Intrachain disulfides connect Cys-36–Cys-180, Cys-96–Cys-103, Cys-109–Cys-135, and Cys-122–Cys-133. A glycan (N-linked (GlcNAc...) asparagine) is linked at Asn-60.

It localises to the lysosome. The enzyme catalyses cholesterol(in) = cholesterol(out). The large binding pocket can accommodate several single chain phospholipids and fatty acids, GM2A also exhibits some calcium-independent phospholipase activity. Binds gangliosides and stimulates ganglioside GM2 degradation. It stimulates only the breakdown of ganglioside GM2 and glycolipid GA2 by beta-hexosaminidase A. It extracts single GM2 molecules from membranes and presents them in soluble form to beta-hexosaminidase A for cleavage of N-acetyl-D-galactosamine and conversion to GM3. Has cholesterol transfer activity. This is Ganglioside GM2 activator (GM2A) from Macaca fascicularis (Crab-eating macaque).